Reading from the N-terminus, the 353-residue chain is UPF0283 membrane protein YcjF (353 aa).

3 helical membrane passes run 70-90 (MVMGGLALFGASVVGQGVQWT), 100-120 (VALGGCAAGALIVGAGVGSVV), and 213-233 (ESTLMIAVSPLALVDMAFIAW).

This sequence belongs to the UPF0283 family.

It localises to the cell inner membrane. In Salmonella schwarzengrund (strain CVM19633), this protein is UPF0283 membrane protein YcjF.